Here is a 641-residue protein sequence, read N- to C-terminus: MQEEHNYKWVGGRLIYGFGAKGNDAFYSILSGYLIIFITSHLFDTGNKALDNRMVSLVTLIIMVLRIVELFIDPFIGNAIDRTKNSPGHFRPWVVVGGTVSSIILLLLFTNLGGLYAKNAMIYLVVFAILYITMDIFYSFKDVGFWSMLPSLTTDSREREKTATFARLGSTIGGGLVGVLVMPAVIFFSAKATSTGDNRGWFIFALIICLIALISAWGVGLGTREVDSDIRKNKQDTVGVMEIFKALAKNDQLLWAALAYLFYGVGINILGSLEVYYFTYIMGKPKSFSILSIINIFLGLIATSLFPVLSKKFSRKGVFAGCLVFMLGGIAIFTIAGSNLWLVLLAATMFGFPQQMVFLVVLMVITDSVEYGQLKLGHRDESLALSVRPLIDKFGGAISNGVVGQIAIISGMTTGATASSITAAGQLHFKLTMFAFPALMLLIAIGIFSKQIFLTEEKHAEIVAELERTWRTKFDNTTDQVAEKVVTSLDLATPIAGQVIPLAQVNDPTFAAGTLGDGFAIKPSDGRILAPFDATVRQVFTTRHAVGLVGDNGIVLLIHIGLGTVKLRGTGFISYVEEGQHVQQGDELLEFWDPTIKQAGLDDTVIMTVTNSTEFTMMDWLVKPGQAVKATDNILQLHTKA.

Positions 1–506 (MQEEHNYKWV…GQVIPLAQVN (506 aa)) are permease. Helical transmembrane passes span 25–45 (AFYS…LFDT), 57–77 (LVTL…PFIG), 93–113 (WVVV…TNLG), 120–140 (AMIY…FYSF), 168–188 (LGST…VIFF), 201–221 (WFIF…GVGL), 253–273 (LLWA…LGSL), 288–308 (FSIL…LFPV), 317–337 (GVFA…TIAG), 342–362 (LVLL…LVVL), 394–414 (FGGA…GMTT), and 429–449 (FKLT…GIFS). One can recognise a PTS EIIA type-1 domain in the interval 507 to 611 (DPTFAAGTLG…DDTVIMTVTN (105 aa)). At H559 the chain carries Phosphohistidine; by HPr.

It in the N-terminal section; belongs to the sodium:galactoside symporter (TC 2.A.2) family.

The protein resides in the cell membrane. This is Raffinose carrier protein (rafP) from Pediococcus pentosaceus.